Here is a 177-residue protein sequence, read N- to C-terminus: Large ribosomal subunit protein uL6 (177 aa).

Belongs to the universal ribosomal protein uL6 family. Part of the 50S ribosomal subunit.

In terms of biological role, this protein binds to the 23S rRNA, and is important in its secondary structure. It is located near the subunit interface in the base of the L7/L12 stalk, and near the tRNA binding site of the peptidyltransferase center. This is Large ribosomal subunit protein uL6 from Alteromonas mediterranea (strain DSM 17117 / CIP 110805 / LMG 28347 / Deep ecotype).